The primary structure comprises 652 residues: Phosphomethylpyrimidine synthase (652 aa).

Residues asparagine 235, methionine 264, tyrosine 293, histidine 329, 349 to 351, 390 to 393, and glutamate 429 each bind substrate; these read SRG and DGMR. Zn(2+) is bound at residue histidine 433. A substrate-binding site is contributed by tyrosine 456. Histidine 497 is a Zn(2+) binding site. Positions 577, 580, and 585 each coordinate [4Fe-4S] cluster.

This sequence belongs to the ThiC family. As to quaternary structure, homodimer. [4Fe-4S] cluster serves as cofactor.

The enzyme catalyses 5-amino-1-(5-phospho-beta-D-ribosyl)imidazole + S-adenosyl-L-methionine = 4-amino-2-methyl-5-(phosphooxymethyl)pyrimidine + CO + 5'-deoxyadenosine + formate + L-methionine + 3 H(+). It participates in cofactor biosynthesis; thiamine diphosphate biosynthesis. Its function is as follows. Catalyzes the synthesis of the hydroxymethylpyrimidine phosphate (HMP-P) moiety of thiamine from aminoimidazole ribotide (AIR) in a radical S-adenosyl-L-methionine (SAM)-dependent reaction. The chain is Phosphomethylpyrimidine synthase from Shewanella woodyi (strain ATCC 51908 / MS32).